We begin with the raw amino-acid sequence, 519 residues long: Cysteine--tRNA ligase (519 aa).

C30 contacts Zn(2+). Residues 32–42 carry the 'HIGH' region motif; the sequence is PTVYDRAHLGN. Residues C221, H253, and E257 each coordinate Zn(2+). Residues 286 to 290 carry the 'KMSKS' region motif; sequence KMSKS. Residue K289 participates in ATP binding.

Belongs to the class-I aminoacyl-tRNA synthetase family. As to quaternary structure, monomer. Zn(2+) serves as cofactor.

It localises to the cytoplasm. It carries out the reaction tRNA(Cys) + L-cysteine + ATP = L-cysteinyl-tRNA(Cys) + AMP + diphosphate. The chain is Cysteine--tRNA ligase from Cereibacter sphaeroides (strain KD131 / KCTC 12085) (Rhodobacter sphaeroides).